The following is a 159-amino-acid chain: Transcriptional repressor NrdR (159 aa).

The segment at 3-34 (CPTCQNTDSRVLESRSADTGKSVRRRRECLNC) is a zinc-finger region. The ATP-cone domain occupies 49–139 (ISVIKKDGSR…VYRKFNGVKD (91 aa)).

The protein belongs to the NrdR family. The cofactor is Zn(2+).

Its function is as follows. Negatively regulates transcription of bacterial ribonucleotide reductase nrd genes and operons by binding to NrdR-boxes. This is Transcriptional repressor NrdR from Prochlorococcus marinus subsp. pastoris (strain CCMP1986 / NIES-2087 / MED4).